A 325-amino-acid polypeptide reads, in one-letter code: uncharacterized protein (325 aa).

Tyrosine 59 (proton donor) is an active-site residue. Substrate is bound at residue histidine 117.

Belongs to the aldo/keto reductase family.

Its subcellular location is the cytoplasm. It is found in the nucleus. This is an uncharacterized protein from Schizosaccharomyces pombe (strain 972 / ATCC 24843) (Fission yeast).